Reading from the N-terminus, the 464-residue chain is tRNA(Ile)-lysidine synthase (464 aa).

30–35 (SGGVDS) contributes to the ATP binding site.

Belongs to the tRNA(Ile)-lysidine synthase family.

It localises to the cytoplasm. The enzyme catalyses cytidine(34) in tRNA(Ile2) + L-lysine + ATP = lysidine(34) in tRNA(Ile2) + AMP + diphosphate + H(+). Functionally, ligates lysine onto the cytidine present at position 34 of the AUA codon-specific tRNA(Ile) that contains the anticodon CAU, in an ATP-dependent manner. Cytidine is converted to lysidine, thus changing the amino acid specificity of the tRNA from methionine to isoleucine. The chain is tRNA(Ile)-lysidine synthase from Shewanella oneidensis (strain ATCC 700550 / JCM 31522 / CIP 106686 / LMG 19005 / NCIMB 14063 / MR-1).